We begin with the raw amino-acid sequence, 83 residues long: Bowman-Birk type proteinase inhibitor C-II (83 aa).

A propeptide spanning residues 1 to 7 is cleaved from the precursor; it reads MELNLFK. 7 cysteine pairs are disulfide-bonded: C21–C75, C22–C37, C25–C71, C27–C35, C45–C52, C49–C64, and C54–C62.

This sequence belongs to the Bowman-Birk serine protease inhibitor family.

The protein is Bowman-Birk type proteinase inhibitor C-II of Glycine max (Soybean).